The following is a 102-amino-acid chain: Heat shock protein HspQ (102 aa).

The protein belongs to the HspQ family.

The protein resides in the cytoplasm. Functionally, involved in the degradation of certain denaturated proteins, including DnaA, during heat shock stress. This Pectobacterium atrosepticum (strain SCRI 1043 / ATCC BAA-672) (Erwinia carotovora subsp. atroseptica) protein is Heat shock protein HspQ.